A 111-amino-acid polypeptide reads, in one-letter code: Pyrimidine/purine nucleoside phosphorylase 1 (111 aa).

Belongs to the nucleoside phosphorylase PpnP family.

It carries out the reaction a purine D-ribonucleoside + phosphate = a purine nucleobase + alpha-D-ribose 1-phosphate. The enzyme catalyses adenosine + phosphate = alpha-D-ribose 1-phosphate + adenine. It catalyses the reaction cytidine + phosphate = cytosine + alpha-D-ribose 1-phosphate. The catalysed reaction is guanosine + phosphate = alpha-D-ribose 1-phosphate + guanine. It carries out the reaction inosine + phosphate = alpha-D-ribose 1-phosphate + hypoxanthine. The enzyme catalyses thymidine + phosphate = 2-deoxy-alpha-D-ribose 1-phosphate + thymine. It catalyses the reaction uridine + phosphate = alpha-D-ribose 1-phosphate + uracil. The catalysed reaction is xanthosine + phosphate = alpha-D-ribose 1-phosphate + xanthine. Catalyzes the phosphorolysis of diverse nucleosides, yielding D-ribose 1-phosphate and the respective free bases. Can use uridine, adenosine, guanosine, cytidine, thymidine, inosine and xanthosine as substrates. Also catalyzes the reverse reactions. The sequence is that of Pyrimidine/purine nucleoside phosphorylase 1 from Psychrobacter arcticus (strain DSM 17307 / VKM B-2377 / 273-4).